The primary structure comprises 152 residues: Large ribosomal subunit protein bL9 (152 aa).

This sequence belongs to the bacterial ribosomal protein bL9 family.

In terms of biological role, binds to the 23S rRNA. This is Large ribosomal subunit protein bL9 from Microcystis aeruginosa (strain NIES-843 / IAM M-2473).